Reading from the N-terminus, the 57-residue chain is Small hydrophobic protein (57 aa).

Residues 1-8 (MPAIQPPL) are Virion surface-facing. Residues 9–29 (YLTFLLLILLYLIITLYVWTI) form a helical membrane-spanning segment. The Intravirion segment spans residues 30–57 (LTITYKTTVRYAALYQRSFSRWGFDQSL).

It belongs to the rubulavirus small hydrophobic protein family. In terms of assembly, interacts with host TNFRSF1A, RIPK1 and IRAK1; these interactions interfere with host NF-kappa-B activation at the level of receptor complexes. Interacts with host protein UBQLN4.

It localises to the virion membrane. It is found in the host cell membrane. Plays a role in the inhibition of the host NF-kappa-B pathway. This inhibition occurs at the receptor level, by preventing the signaling of TNFR1 as well as IL-1R and TLR3. This chain is Small hydrophobic protein (SH), found in Homo sapiens (Human).